The following is a 732-amino-acid chain: Probable boron transporter 3 (732 aa).

An N-acetylmethionine modification is found at Met1. Residues 1–37 (MDEAESFVPFQGIKKDVKGRLNCYKQDWISGLRAGFR) lie on the Cytoplasmic side of the membrane. The chain crosses the membrane as a helical span at residues 38-58 (ILAPTTYIFFASAIPVITFGE). Residues 59–77 (QLERDTDGKITAVQTLVST) are Extracellular-facing. The chain crosses the membrane as a helical span at residues 78-98 (ALCGVIHSIIGGQPLLILGVA). The Cytoplasmic portion of the chain corresponds to 99-123 (EPTVIMYTFMFNFAKSRTDLGSNLF). The helical transmembrane segment at 124 to 144 (LAWTGWVCLWTGLLLFLLAVL) threads the bilayer. Over 145–157 (GACTFINRFTRLA) the chain is Extracellular. The chain crosses the membrane as a helical span at residues 158 to 178 (GELFGILIAMLFMQEAIRGIV). Residues 179-197 (DEFGVPGRTNPRSAEFQPA) lie on the Cytoplasmic side of the membrane. Residues 198–218 (WVFANGMFGLVLSSGLLYTGL) traverse the membrane as a helical segment. Residues 219–234 (KSRKARSWRFGAEWLR) are Extracellular-facing. The helical transmembrane segment at 235-255 (GFIADYGVPVMVVVWTCISYI) threads the bilayer. Residues 256 to 291 (PWKSVPQGIPRRLVSPNPWSPGAYQNWTVIKEMVDV) are Cytoplasmic-facing. The chain crosses the membrane as a helical span at residues 292–312 (PVLYILLAVVPASMIAVLYYF). At 313–339 (DHSVASQLAQQEDFNLRKPPAYHYDLF) the chain is on the extracellular side. The chain crosses the membrane as a helical span at residues 340–360 (LLGFLTILCGLIGIPPSNGVI). The Cytoplasmic segment spans residues 361 to 463 (PQSPMHTKSL…ILPVEVKEQR (103 aa)). Residues 464 to 484 (VSNFLQAMMVAGCVAAMPLIK) form a helical membrane-spanning segment. The Extracellular segment spans residues 485–556 (RIPSSVLWGY…LFQTAYLLVC (72 aa)). A helical membrane pass occupies residues 557–577 (FGITWVPVAGVLFPLMIMFLV). The Cytoplasmic segment spans residues 578–732 (PVRQYVLPNF…QRLSNLGKSV (155 aa)). Residues 695–732 (GGGEISPRSSAGRAPFSPRSATGGGGGEQRLSNLGKSV) form a disordered region.

This sequence belongs to the anion exchanger (TC 2.A.31.3) family.

The protein localises to the membrane. Probable boron transporter. Boron is essential for maintaining the integrity of plants cell walls. The sequence is that of Probable boron transporter 3 (BOR3) from Arabidopsis thaliana (Mouse-ear cress).